Here is a 213-residue protein sequence, read N- to C-terminus: tRNA (guanine-N(7)-)-methyltransferase (213 aa).

4 residues coordinate S-adenosyl-L-methionine: glutamate 44, glutamate 69, aspartate 96, and aspartate 118. Aspartate 118 is a catalytic residue. Substrate contacts are provided by residues lysine 122, aspartate 154, and 192-195; that span reads TEYE.

This sequence belongs to the class I-like SAM-binding methyltransferase superfamily. TrmB family.

The catalysed reaction is guanosine(46) in tRNA + S-adenosyl-L-methionine = N(7)-methylguanosine(46) in tRNA + S-adenosyl-L-homocysteine. It functions in the pathway tRNA modification; N(7)-methylguanine-tRNA biosynthesis. Its function is as follows. Catalyzes the formation of N(7)-methylguanine at position 46 (m7G46) in tRNA. The protein is tRNA (guanine-N(7)-)-methyltransferase of Limosilactobacillus reuteri (strain DSM 20016) (Lactobacillus reuteri).